The sequence spans 134 residues: uncharacterized protein (134 aa).

The helical transmembrane segment at 110 to 130 threads the bilayer; it reads SLGVLTDILFLVLYSLLIHLS.

The protein resides in the membrane. This is an uncharacterized protein from Saccharomyces cerevisiae (strain ATCC 204508 / S288c) (Baker's yeast).